Consider the following 240-residue polypeptide: DISARM protein DrmC (240 aa).

The region spanning 174–201 (GYSSLHAKVIMVDEEKAFVSSANLSYNG) is the PLD phosphodiesterase domain. Active-site residues include H179, K181, and D186.

This sequence belongs to the phospholipase D family.

The protein localises to the cytoplasm. In terms of biological role, component of antiviral defense system DISARM (defense island system associated with restriction-modification), composed of DrmE, DrmA, DrmB, DrmC and DrmMII. DISARM is probably a multi-gene restriction module, this subunit is probably a phospholipase or nuclease. Expression of DISARM in B.subtilis (strain BEST7003) confers resistance to phages Nf, phi29, phi105, phi3T, SPO1, SPR and SPP1. Protection is over 10(7)-fold against phi3T, 10(4)-10(5)-fold against Nf, phi29, phi105 and SPR, 100-fold against SPO1 and 10-fold against SPP1. DISARM does not interfere with phage adsorption, but instead interferes with (phi3T) DNA replication early in its cycle, preventing replication, circularization and lysogeny and probably causes phage DNA degradation (DNA is degraded in SPP1-infected cells). The polypeptide is DISARM protein DrmC (Bacillus paralicheniformis (strain ATCC 9945a / NCIMB 11709 / CD-2)).